Here is a 1503-residue protein sequence, read N- to C-terminus: Lysophospholipase NTE1 (1503 aa).

The Cytoplasmic segment spans residues 1 to 25 (MDSSTAALATASAKLDAVAQQGSSS). A helical transmembrane segment spans residues 26–46 (WIGFFANIILGIISLVYSILY). Residues 47–71 (SVLKLTTFSIPSLLYTLFSTSLTVT) lie on the Lumenal side of the membrane. A helical transmembrane segment spans residues 72-92 (MNATTLMLIIVLVFSLVSWFV). Residues 93-1503 (RYRYLNMYSR…RTMAPRRASI (1411 aa)) are Cytoplasmic-facing. 3 disordered regions span residues 252 to 348 (RHGG…TTSV), 454 to 561 (TKGI…SNPF), and 722 to 745 (KNES…RFMD). Polar residues-rich tracts occupy residues 262–272 (TSATETYTSSR), 285–302 (STVS…SSHG), 487–496 (QRPSSVTASP), 506–542 (KHTS…STLL), 552–561 (PLSQRTSNPF), and 723–737 (NESS…QQGS). A nucleoside 3',5'-cyclic phosphate contacts are provided by residues 658-777 (GLPV…GYVG) and 821-941 (RLTN…IASR). The PNPLA domain occupies 1200–1364 (LVLGGGGARG…IDNLTVSHMK (165 aa)). The GXGXXG signature appears at 1204 to 1209 (GGGARG). A GXSXG motif is present at residues 1231–1235 (GTSIG). Residue Ser1233 is the Nucleophile of the active site. The active-site Proton acceptor is Asp1351. The short motif at 1351 to 1353 (DGG) is the DGA/G element.

Belongs to the NTE family.

It is found in the endoplasmic reticulum membrane. The catalysed reaction is a 1-acyl-sn-glycero-3-phosphocholine + H2O = sn-glycerol 3-phosphocholine + a fatty acid + H(+). Inhibited by organophosphorus esters. Functionally, intracellular phospholipase B that catalyzes the double deacylation of phosphatidylcholine (PC) to glycerophosphocholine (GroPCho). Plays an important role in membrane lipid homeostasis. Responsible for the rapid PC turnover in response to inositol, elevated temperatures, or when choline is present in the growth medium. In Pyricularia oryzae (strain 70-15 / ATCC MYA-4617 / FGSC 8958) (Rice blast fungus), this protein is Lysophospholipase NTE1 (NTE1).